Reading from the N-terminus, the 321-residue chain is tRNA U34 carboxymethyltransferase (321 aa).

Residues Lys90, Trp104, Lys109, Gly129, 151 to 153 (DPT), 180 to 181 (IE), Met195, Tyr199, and Arg314 each bind carboxy-S-adenosyl-L-methionine.

Belongs to the class I-like SAM-binding methyltransferase superfamily. CmoB family. As to quaternary structure, homotetramer.

The catalysed reaction is carboxy-S-adenosyl-L-methionine + 5-hydroxyuridine(34) in tRNA = 5-carboxymethoxyuridine(34) in tRNA + S-adenosyl-L-homocysteine + H(+). Its function is as follows. Catalyzes carboxymethyl transfer from carboxy-S-adenosyl-L-methionine (Cx-SAM) to 5-hydroxyuridine (ho5U) to form 5-carboxymethoxyuridine (cmo5U) at position 34 in tRNAs. This is tRNA U34 carboxymethyltransferase from Haemophilus influenzae (strain PittEE).